The sequence spans 240 residues: Epoxyqueuosine reductase QueH (240 aa).

[4Fe-4S] cluster contacts are provided by Cys43, Cys44, Cys129, and Cys132. Residues Cys211 and Cys213 are joined by a disulfide bond.

Belongs to the QueH family.

The catalysed reaction is epoxyqueuosine(34) in tRNA + AH2 = queuosine(34) in tRNA + A + H2O. The protein operates within tRNA modification; tRNA-queuosine biosynthesis. Its function is as follows. Catalyzes the conversion of epoxyqueuosine (oQ) to queuosine (Q), which is a hypermodified base found in the wobble positions of tRNA(Asp), tRNA(Asn), tRNA(His) and tRNA(Tyr). The chain is Epoxyqueuosine reductase QueH from Staphylococcus aureus (strain Mu50 / ATCC 700699).